Reading from the N-terminus, the 160-residue chain is 2-C-methyl-D-erythritol 2,4-cyclodiphosphate synthase (160 aa).

Residues D9 and H11 each coordinate a divalent metal cation. 4-CDP-2-C-methyl-D-erythritol 2-phosphate contacts are provided by residues 9-11 (DVH) and 35-36 (HS). Position 43 (H43) interacts with a divalent metal cation. 4-CDP-2-C-methyl-D-erythritol 2-phosphate contacts are provided by residues 57-59 (DIG), 62-66 (FPDTD), 133-136 (TTTE), F140, and R143.

This sequence belongs to the IspF family. Homotrimer. Requires a divalent metal cation as cofactor.

The enzyme catalyses 4-CDP-2-C-methyl-D-erythritol 2-phosphate = 2-C-methyl-D-erythritol 2,4-cyclic diphosphate + CMP. Its pathway is isoprenoid biosynthesis; isopentenyl diphosphate biosynthesis via DXP pathway; isopentenyl diphosphate from 1-deoxy-D-xylulose 5-phosphate: step 4/6. Involved in the biosynthesis of isopentenyl diphosphate (IPP) and dimethylallyl diphosphate (DMAPP), two major building blocks of isoprenoid compounds. Catalyzes the conversion of 4-diphosphocytidyl-2-C-methyl-D-erythritol 2-phosphate (CDP-ME2P) to 2-C-methyl-D-erythritol 2,4-cyclodiphosphate (ME-CPP) with a corresponding release of cytidine 5-monophosphate (CMP). This Haemophilus ducreyi (strain 35000HP / ATCC 700724) protein is 2-C-methyl-D-erythritol 2,4-cyclodiphosphate synthase.